We begin with the raw amino-acid sequence, 229 residues long: NAD(P)H-quinone oxidoreductase subunit K, chloroplastic (229 aa).

Residues cysteine 43, cysteine 44, cysteine 108, and cysteine 139 each coordinate [4Fe-4S] cluster.

Belongs to the complex I 20 kDa subunit family. NDH is composed of at least 16 different subunits, 5 of which are encoded in the nucleus. The cofactor is [4Fe-4S] cluster.

It is found in the plastid. It localises to the chloroplast thylakoid membrane. It carries out the reaction a plastoquinone + NADH + (n+1) H(+)(in) = a plastoquinol + NAD(+) + n H(+)(out). The enzyme catalyses a plastoquinone + NADPH + (n+1) H(+)(in) = a plastoquinol + NADP(+) + n H(+)(out). NDH shuttles electrons from NAD(P)H:plastoquinone, via FMN and iron-sulfur (Fe-S) centers, to quinones in the photosynthetic chain and possibly in a chloroplast respiratory chain. The immediate electron acceptor for the enzyme in this species is believed to be plastoquinone. Couples the redox reaction to proton translocation, and thus conserves the redox energy in a proton gradient. In Aethionema grandiflorum (Persian stone-cress), this protein is NAD(P)H-quinone oxidoreductase subunit K, chloroplastic.